The primary structure comprises 335 residues: tRNA N6-adenosine threonylcarbamoyltransferase (335 aa).

H111 and H115 together coordinate Fe cation. Substrate-binding positions include 134–138 (LISGG), D167, G180, and N270. D298 is a Fe cation binding site.

This sequence belongs to the KAE1 / TsaD family. The cofactor is Fe(2+).

The protein localises to the cytoplasm. It carries out the reaction L-threonylcarbamoyladenylate + adenosine(37) in tRNA = N(6)-L-threonylcarbamoyladenosine(37) in tRNA + AMP + H(+). In terms of biological role, required for the formation of a threonylcarbamoyl group on adenosine at position 37 (t(6)A37) in tRNAs that read codons beginning with adenine. Is involved in the transfer of the threonylcarbamoyl moiety of threonylcarbamoyl-AMP (TC-AMP) to the N6 group of A37, together with TsaE and TsaB. TsaD likely plays a direct catalytic role in this reaction. The chain is tRNA N6-adenosine threonylcarbamoyltransferase from Nitrosococcus oceani (strain ATCC 19707 / BCRC 17464 / JCM 30415 / NCIMB 11848 / C-107).